Consider the following 347-residue polypeptide: MEHDGTINYDVSENHGHVPVMRARMAQLLAPAIEAAGENAVIVDGTLGAGGHSEYFLTTFPSVRIIGVDRDSASLSSASRRLSPFADRFVGVNARFDEVGSAIAEGESEVFSIAREHGIAGALFDLGVSSMQLDQVDRGFAYKTDAPLDMRMDPRQGMTAADILNTYSHGDLARILKTYGDERFAGKIASAVLREREKEPFGNSARLVDLLYATIPAATRRTGGHPAKRTFQALRVEVNRELEAIEQVIPVITDALSIGGRAVFMSYQSLEDRIVKHAFTKLSTSTTPAGLPMDLPGTAAHYSVVTRGAEKASQEEIAENPRAASVRVRALERLEGTPSFHEPGGRP.

S-adenosyl-L-methionine is bound by residues 50–52, Asp-69, Phe-96, Asp-125, and Gln-132; that span reads GGH.

The protein belongs to the methyltransferase superfamily. RsmH family.

The protein resides in the cytoplasm. The catalysed reaction is cytidine(1402) in 16S rRNA + S-adenosyl-L-methionine = N(4)-methylcytidine(1402) in 16S rRNA + S-adenosyl-L-homocysteine + H(+). In terms of biological role, specifically methylates the N4 position of cytidine in position 1402 (C1402) of 16S rRNA. In Corynebacterium aurimucosum (strain ATCC 700975 / DSM 44827 / CIP 107346 / CN-1) (Corynebacterium nigricans), this protein is Ribosomal RNA small subunit methyltransferase H.